The chain runs to 214 residues: Probable nicotinate-nucleotide adenylyltransferase (214 aa).

The protein belongs to the NadD family.

The enzyme catalyses nicotinate beta-D-ribonucleotide + ATP + H(+) = deamido-NAD(+) + diphosphate. The protein operates within cofactor biosynthesis; NAD(+) biosynthesis; deamido-NAD(+) from nicotinate D-ribonucleotide: step 1/1. In terms of biological role, catalyzes the reversible adenylation of nicotinate mononucleotide (NaMN) to nicotinic acid adenine dinucleotide (NaAD). The sequence is that of Probable nicotinate-nucleotide adenylyltransferase from Mycobacterium bovis (strain ATCC BAA-935 / AF2122/97).